We begin with the raw amino-acid sequence, 415 residues long: Beta-2 adrenergic receptor (415 aa).

At 1-34 (MGQPANRSVFLLAPNGSHAPDQGDSQERSEAWVV) the chain is on the extracellular side. N-linked (GlcNAc...) asparagine glycans are attached at residues Asn6 and Asn15. The chain crosses the membrane as a helical span at residues 35–58 (GMGIVMSLIVLAIVFGNVLVITAI). At 59–71 (ARFERLQTVTNYF) the chain is on the cytoplasmic side. The chain crosses the membrane as a helical span at residues 72-95 (ITSLACADLVMGLAVVPFGASHIL). The Extracellular portion of the chain corresponds to 96-106 (MKMWTFGNFWC). Cystine bridges form between Cys106–Cys191 and Cys184–Cys190. The chain crosses the membrane as a helical span at residues 107–129 (EFWTSIDVLCVTASIETLCVIAV). The Cytoplasmic portion of the chain corresponds to 130-150 (DRYFAITSPFKYQSLLTKNKA). Tyr141 carries the phosphotyrosine modification. Residues 151-174 (RVVILMVWIVSGLTSFLPIQMHWY) traverse the membrane as a helical segment. At 175–196 (RATHQEAINCYAKETCCDFFTN) the chain is on the extracellular side. A helical membrane pass occupies residues 197 to 220 (QAYAIASSIVSFYLPLVVMVFVYS). Residues 221–274 (RVFQVAQRQLQKIDRSEGRFHAQNLSQVEQDGRSGHGHRRSSKFCLKEHKALKT) lie on the Cytoplasmic side of the membrane. Residue Ser246 is modified to Phosphoserine. Residues Ser261 and Ser262 each carry the phosphoserine; by PKA modification. Cys265 carries S-palmitoyl cysteine lipidation. Residues 275–298 (LGIIMGTFTLCWLPFFIVNIVHVI) traverse the membrane as a helical segment. The Extracellular portion of the chain corresponds to 299–305 (QDNLIPK). A helical membrane pass occupies residues 306-329 (EVYILLNWVGYVNSAFNPLIYCRS). At 330 to 415 (PDFRIAFQEL…RNCSTNDSLL (86 aa)) the chain is on the cytoplasmic side. Residue Cys341 is the site of S-palmitoyl cysteine attachment. 2 positions are modified to phosphoserine; by PKA: Ser345 and Ser346. At Ser355 the chain carries Phosphoserine; by BARK. A disordered region spans residues 379 to 415 (SELLCEDPPGTEDRQGTVPSDSVDSQGRNCSTNDSLL). A 4-hydroxyproline mark is found at Pro387 and Pro397. Residues 395–415 (TVPSDSVDSQGRNCSTNDSLL) show a composition bias toward polar residues. The short motif at 412–415 (DSLL) is the PDZ-binding element.

It belongs to the G-protein coupled receptor 1 family. Adrenergic receptor subfamily. ADRB2 sub-subfamily. Binds NHERF1 and GPRASP1. Interacts with ARRB1 and ARRB2. Interacts with SRC. Interacts with USP20 and USP33. Interacts with VHL; the interaction, which is increased on hydroxylation of ADRB2, ubiquitinates ADRB2 leading to its degradation. Interacts with EGLN3; the interaction hydroxylates ADRB2 facilitating VHL-E3 ligase-mediated ubiquitination. Interacts (via PDZ-binding motif) with SNX27 (via PDZ domain); the interaction is required when endocytosed to prevent degradation in lysosomes and promote recycling to the plasma membrane. Interacts with CNIH4. Interacts with ARRDC3. Interacts with NEDD4. Interacts with MARCHF2. Palmitoylated; may reduce accessibility of Ser-345 and Ser-346 by anchoring Cys-341 to the plasma membrane. Agonist stimulation promotes depalmitoylation and further allows Ser-345 and Ser-346 phosphorylation. In terms of processing, phosphorylated by PKA and BARK upon agonist stimulation, which mediates homologous desensitization of the receptor. PKA-mediated phosphorylation seems to facilitate phosphorylation by BARK. Post-translationally, phosphorylation of Tyr-141 is induced by insulin and leads to supersensitization of the receptor. Polyubiquitinated. Agonist-induced ubiquitination leads to sort internalized receptors to the lysosomes for degradation. Deubiquitination by USP20 and USP33, leads to ADRB2 recycling and resensitization after prolonged agonist stimulation. USP20 and USP33 are constitutively associated and are dissociated immediately after agonist stimulation. Ubiquitination by the VHL-E3 ligase complex is oxygen-dependent. In terms of processing, hydroxylation by EGLN3 occurs only under normoxia and increases the interaction with VHL and the subsequent ubiquitination and degradation of ADRB2. Post-translationally, palmitoylated. Mainly palmitoylated at Cys-341. Palmitoylation may reduce accessibility of phosphorylation sites by anchoring the receptor to the plasma membrane. Agonist stimulation promotes depalmitoylation and further allows Ser-345 and Ser-346 phosphorylation. Also undergoes transient, ligand-induced palmitoylation at Cys-265 probably by ZDHHC9, ZDHHC14 and ZDHHC18 within the Golgi. Palmitoylation at Cys-265 requires phosphorylation by PKA and receptor internalization and stabilizes the receptor. Could be depalmitoylated by LYPLA1 at the plasma membrane.

It is found in the cell membrane. Its subcellular location is the early endosome. It localises to the golgi apparatus. Functionally, beta-adrenergic receptors mediate the catecholamine-induced activation of adenylate cyclase through the action of G proteins. The beta-2-adrenergic receptor binds epinephrine with an approximately 30-fold greater affinity than it does norepinephrine. The sequence is that of Beta-2 adrenergic receptor (ADRB2) from Canis lupus familiaris (Dog).